A 184-amino-acid chain; its full sequence is Ribosome-recycling factor (184 aa).

This sequence belongs to the RRF family.

The protein resides in the cytoplasm. Functionally, responsible for the release of ribosomes from messenger RNA at the termination of protein biosynthesis. May increase the efficiency of translation by recycling ribosomes from one round of translation to another. This is Ribosome-recycling factor from Fervidobacterium nodosum (strain ATCC 35602 / DSM 5306 / Rt17-B1).